The sequence spans 141 residues: Large ribosomal subunit protein uL11 (141 aa).

It belongs to the universal ribosomal protein uL11 family. Part of the ribosomal stalk of the 50S ribosomal subunit. Interacts with L10 and the large rRNA to form the base of the stalk. L10 forms an elongated spine to which L12 dimers bind in a sequential fashion forming a multimeric L10(L12)X complex. Post-translationally, one or more lysine residues are methylated.

In terms of biological role, forms part of the ribosomal stalk which helps the ribosome interact with GTP-bound translation factors. The protein is Large ribosomal subunit protein uL11 of Streptococcus gordonii (strain Challis / ATCC 35105 / BCRC 15272 / CH1 / DL1 / V288).